Reading from the N-terminus, the 1386-residue chain is Pleckstrin homology domain-containing family G member 2 (1386 aa).

2 disordered regions span residues 1 to 21 (MPEG…GCGR) and 36 to 82 (TAPA…PLPG). Low complexity-rich tracts occupy residues 8 to 17 (LSLSKPSPSL) and 45 to 62 (SPRG…GSEG). Phosphoserine is present on Ser90. One can recognise a DH domain in the interval 102-283 (RLERVAREIV…TAVAWYINDM (182 aa)). The PH domain maps to 313-411 (ELVLEGAFRG…WIHCLQRLFF (99 aa)). Disordered stretches follow at residues 436-540 (KSKP…PSGT), 554-612 (GLRD…PSPL), 701-739 (EPAE…EEGV), 790-815 (ILED…RTAS), and 829-859 (QQMQ…SPCL). A Phosphothreonine modification is found at Thr445. A phosphoserine mark is found at Ser450 and Ser469. The span at 592–603 (SEEEEEEEEGLE) shows a compositional bias: acidic residues. Phosphoserine occurs at positions 911 and 1049. Disordered regions lie at residues 1037-1099 (PVPK…PLPC) and 1162-1191 (TSPK…DTQV). Composition is skewed to polar residues over residues 1048-1059 (ESPTNIPLTKQG) and 1073-1086 (QPIQ…SSLD). A Phosphothreonine modification is found at Thr1257. 2 positions are modified to phosphoserine: Ser1261 and Ser1310. 2 disordered regions span residues 1291 to 1333 (ARRQ…ARRL) and 1367 to 1386 (TQES…PFHM). The span at 1301 to 1317 (PAASRGSWSSAPTSRAS) shows a compositional bias: low complexity. Positions 1318-1330 (SPPPQPQPPPPPA) are enriched in pro residues.

In terms of biological role, may be a transforming oncogene with exchange activity for CDC42. May be a guanine-nucleotide exchange factor (GEF) for RAC1 and CDC42. Activated by the binding to subunits beta and gamma of the heterotrimeric guanine nucleotide-binding protein (G protein). Involved in the regulation of actin polymerization. The chain is Pleckstrin homology domain-containing family G member 2 (PLEKHG2) from Homo sapiens (Human).